We begin with the raw amino-acid sequence, 345 residues long: MAASGKLGTFRLPPLPTIREIIKLFGLRAAKQLSQNFLLDLRLTDKIVRKAGSLADVYVYEVGPGPGGITRSILNADIAELLVVEKDTRFIPGLQMLSDAAPGKLRIVHGDVLTYKIEKAFPDNIRRQWEDDPPNVHIIGNLPFSVSTPLIIKWLENISLKNGPFVYGRTKMTLTFQKEVAERLVATTGSKQRSRLSIMAQYLCNVEHLFTIPGKAFVPKPEVDVGVVHLMPLVQPKIKQPFKLVEKVVQNVFQFRRKYCHRGLGMLFPEAQRLESTGRLLQLADIDPTLRPTHLSLMHFKSLCDVYRKMCDEDPQLFAYNFREELKQKKRKGQEKDGDSESWGF.

Residues M1–L27 constitute a mitochondrion transit peptide. Residues Q35–L38, N36, L38, G63, E85, D111, and N141 contribute to the S-adenosyl-L-methionine site.

Belongs to the class I-like SAM-binding methyltransferase superfamily. rRNA adenine N(6)-methyltransferase family. KsgA subfamily. As to quaternary structure, interacts with mitochondrial RNA polymerase POLRMT. Interacts with TFAM.

The protein resides in the mitochondrion. Functionally, S-adenosyl-L-methionine-dependent methyltransferase which specifically dimethylates mitochondrial 12S rRNA at the conserved stem loop. Also required for basal transcription of mitochondrial DNA, probably via its interaction with POLRMT and TFAM. Stimulates transcription independently of the methyltransferase activity. This is Dimethyladenosine transferase 1, mitochondrial (Tfb1m) from Rattus norvegicus (Rat).